The primary structure comprises 329 residues: uncharacterized protein (329 aa).

2 coiled-coil regions span residues 57–120 (KKEE…QEVT) and 225–251 (QRQRQEEVQEVLQEAEKTHQATLGNMM).

This is an uncharacterized protein from Homo sapiens (Human).